The primary structure comprises 485 residues: E3 ubiquitin-protein ligase TRIM68 (485 aa).

An RING-type zinc finger spans residues Cys-16–Arg-61. A B box-type zinc finger spans residues Leu-93–Ile-134. The Zn(2+) site is built by Cys-98, His-101, Cys-120, and His-126. Residues Lys-144 to Lys-226 are a coiled coil. Residues Leu-285–Gly-483 form the B30.2/SPRY domain.

It belongs to the TRIM/RBCC family. As to quaternary structure, interacts with AR/androgen receptor (via ligand-binding domain). Interacts with KAT5/TIP60. Post-translationally, auto-ubiquitinated.

It localises to the cytoplasm. It is found in the perinuclear region. The protein localises to the nucleus. The catalysed reaction is S-ubiquitinyl-[E2 ubiquitin-conjugating enzyme]-L-cysteine + [acceptor protein]-L-lysine = [E2 ubiquitin-conjugating enzyme]-L-cysteine + N(6)-ubiquitinyl-[acceptor protein]-L-lysine.. The protein operates within protein modification; protein ubiquitination. Functions as a ubiquitin E3 ligase. Acts as a coactivator of androgen receptor (AR) depending on its ubiquitin ligase activity. This chain is E3 ubiquitin-protein ligase TRIM68 (Trim68), found in Mus musculus (Mouse).